The chain runs to 311 residues: Natural killer cell receptor 2B4 (311 aa).

The first 19 residues, Met1–Gly19, serve as a signal peptide directing secretion. At Gln20–Tyr223 the chain is on the extracellular side. A disulfide bridge links Cys22 with Cys118. 2 consecutive Ig-like domains span residues Cys22–Asp128 and Glu131–Gln215. Residues Asn101, Asn144, Asn160, Asn183, Asn196, and Asn205 are each glycosylated (N-linked (GlcNAc...) asparagine). Cys153 and Cys195 are oxidised to a cystine. The helical transmembrane segment at Leu224–Trp247 threads the bilayer. The Cytoplasmic segment spans residues Asn248–Ser311. The interval Arg275–Asp301 is disordered. Positions Val290–Asp301 are enriched in basic and acidic residues.

As to quaternary structure, interacts with CD48. Interacts (via phosphorylated ITSM 1-4) with SH2D1A (via SH2 domain); SH2D1A probably mediates association with FYN. Interacts (via phosphorylated ITSM 3) with PTPN11/SHP-2, INPP5D/SHIP1, PTPN6/SHP-1 and CSK; binding of SH2D1A/SAP prevents association with PTPN11, PTPN6 and CSK; conflictingly a similar association has been described for phosphorylated ITSM 1 also including GRB2 and PLCG1. Interacts weakly (via phosphorylated ITSM 2) with PTPN11/SHP-2 and CSK. Interacts with SH2D1B. Interacts with PIK3R1; PI3K recruits SH2D1A. Interacts with MHC class I proteins; the interaction is proposed to prevent self-killing of NK cells. N-linked glycosylation is essential for the binding to its ligand CD48. Also O-glycosylated, in contrast, O-linked sialylation has a negative impact on ligand binding. In terms of processing, phosphorylated by FYN and CSK on tyrosine residues following activation. Coligation with inhibitory receptors such as KIR2DL1 inhibits phosphorylation upon contact of NK cells with sensitive target cells.

The protein localises to the membrane. It localises to the cell membrane. It is found in the membrane raft. Heterophilic receptor of the signaling lymphocytic activation molecule (SLAM) family; its ligand is CD48. SLAM receptors triggered by homo- or heterotypic cell-cell interactions are modulating the activation and differentiation of a wide variety of immune cells and thus are involved in the regulation and interconnection of both innate and adaptive immune response. Activities are controlled by presence or absence of small cytoplasmic adapter proteins, SH2D1A/SAP and/or SH2D1B/EAT-2. Acts as activating natural killer (NK) cell receptor. Activating function implicates association with SH2D1A and FYN. Downstreaming signaling involves predominantly VAV1, and, to a lesser degree, INPP5D/SHIP1 and CBL. Signal attenuation in the absence of SH2D1A is proposed to be dependent on INPP5D and to a lesser extent PTPN6/SHP-1 and PTPN11/SHP-2. Stimulates NK cell cytotoxicity, production of IFN-gamma and granule exocytosis. Optimal expansion and activation of NK cells seems to be dependent on the engagement of CD244 with CD48 expressed on neighboring NK cells. Acts as costimulator in NK activation by enhancing signals by other NK receptors such as NCR3 and NCR1. At early stages of NK cell differentiation may function as an inhibitory receptor possibly ensuring the self-tolerance of developing NK cells. Involved in the regulation of CD8(+) T-cell proliferation; expression on activated T-cells and binding to CD48 provides costimulatory-like function for neighboring T-cells. Inhibits inflammatory responses in dendritic cells (DCs). The sequence is that of Natural killer cell receptor 2B4 (Cd244) from Rattus norvegicus (Rat).